A 172-amino-acid chain; its full sequence is ATP-dependent kinase-like protein notR' (172 aa).

Belongs to the YFH7 family.

Its function is as follows. ATP-dependent kinase-like protein; part of the gene cluster that mediates the biosynthesis of notoamide, a fungal indole alkaloid that belongs to a family of natural products containing a characteristic bicyclo[2.2.2]diazaoctane core. The first step of notoamide biosynthesis involves coupling of L-proline and L-tryptophan by the bimodular NRPS notE', to produce cyclo-L-tryptophan-L-proline called brevianamide F. The reverse prenyltransferase notF' then acts as a deoxybrevianamide E synthase and converts brevianamide F to deoxybrevianamide E via reverse prenylation at C-2 of the indole ring leading to the bicyclo[2.2.2]diazaoctane core. Deoxybrevianamide E is further hydroxylated at C-6 of the indole ring, likely catalyzed by the cytochrome P450 monooxygenase notG', to yield 6-hydroxy-deoxybrevianamide E. 6-hydroxy-deoxybrevianamide E is a specific substrate of the prenyltransferase notC' for normal prenylation at C-7 to produce 6-hydroxy-7-prenyl-deoxybrevianamide, also called notoamide S. As the proposed pivotal branching point in notoamide biosynthesis, notoamide S can be diverted to notoamide E through an oxidative pyran ring closure putatively catalyzed by either notH' cytochrome P450 monooxygenase or the notD' FAD-linked oxidoreductase. This step would be followed by an indole 2,3-epoxidation-initiated pinacol-like rearrangement catalyzed by the notB' FAD-dependent monooxygenase leading to the formation of notoamide C and notoamide D. On the other hand notoamide S is converted to notoamide T by notH' (or notD'), a bifunctional oxidase that also functions as the intramolecular Diels-Alderase responsible for generation of (-)-notoamide T. To generate antipodal (+)-notoaminide T, notH (or notD) in Aspergillus strain MF297-2 is expected to catalyze a Diels-Alder reaction leading to the opposite stereochemistry. The remaining oxidoreductase notD' (or notH') likely catalyzes the oxidative pyran ring formation to yield (-)-stephacidin A. The FAD-dependent monooxygenase notI' is highly similar to notB' and is predicted to catalyze a similar conversion from (-)-stephacidin A to (+)-notoamide B via the 2,3-epoxidation of (-)-stephacidin A followed by a pinacol-type rearrangement. Finally, it remains unclear which enzyme could be responsible for the final hydroxylation steps leading to notoamide A and sclerotiamide. The function of notQ' in the notoamide biosynthesis has not been determined yet. The protein is ATP-dependent kinase-like protein notR' of Aspergillus versicolor.